The chain runs to 513 residues: Cobyric acid synthase (513 aa).

Residues 270-470 enclose the GATase cobBQ-type domain; the sequence is RLRIAIVAYP…THGLFESPAV (201 aa). Cys351 (nucleophile) is an active-site residue. His462 is a catalytic residue.

The protein belongs to the CobB/CobQ family. CobQ subfamily.

It functions in the pathway cofactor biosynthesis; adenosylcobalamin biosynthesis. Catalyzes amidations at positions B, D, E, and G on adenosylcobyrinic A,C-diamide. NH(2) groups are provided by glutamine, and one molecule of ATP is hydrogenolyzed for each amidation. This Leptothrix cholodnii (strain ATCC 51168 / LMG 8142 / SP-6) (Leptothrix discophora (strain SP-6)) protein is Cobyric acid synthase.